Consider the following 190-residue polypeptide: Threonylcarbamoyl-AMP synthase (190 aa).

Residues 7 to 190 form the YrdC-like domain; that stretch reads GDAIAAAIDV…ALTGELFRQG (184 aa).

Belongs to the SUA5 family. TsaC subfamily.

It is found in the cytoplasm. It catalyses the reaction L-threonine + hydrogencarbonate + ATP = L-threonylcarbamoyladenylate + diphosphate + H2O. Functionally, required for the formation of a threonylcarbamoyl group on adenosine at position 37 (t(6)A37) in tRNAs that read codons beginning with adenine. Catalyzes the conversion of L-threonine, HCO(3)(-)/CO(2) and ATP to give threonylcarbamoyl-AMP (TC-AMP) as the acyladenylate intermediate, with the release of diphosphate. This is Threonylcarbamoyl-AMP synthase from Shigella flexneri.